Consider the following 594-residue polypeptide: Arginine--tRNA ligase (594 aa).

Positions 139–149 match the 'HIGH' region motif; the sequence is ANPTGPLHVGH.

Belongs to the class-I aminoacyl-tRNA synthetase family. In terms of assembly, monomer.

Its subcellular location is the cytoplasm. The enzyme catalyses tRNA(Arg) + L-arginine + ATP = L-arginyl-tRNA(Arg) + AMP + diphosphate. In Burkholderia thailandensis (strain ATCC 700388 / DSM 13276 / CCUG 48851 / CIP 106301 / E264), this protein is Arginine--tRNA ligase.